Consider the following 305-residue polypeptide: NAD kinase (305 aa).

The active-site Proton acceptor is the Asp-76. Residues 76-77 (DG), 150-151 (ND), Arg-161, and Asp-180 contribute to the NAD(+) site.

Belongs to the NAD kinase family. Requires a divalent metal cation as cofactor.

It localises to the cytoplasm. The catalysed reaction is NAD(+) + ATP = ADP + NADP(+) + H(+). Its function is as follows. Involved in the regulation of the intracellular balance of NAD and NADP, and is a key enzyme in the biosynthesis of NADP. Catalyzes specifically the phosphorylation on 2'-hydroxyl of the adenosine moiety of NAD to yield NADP. The chain is NAD kinase from Treponema pallidum (strain Nichols).